Reading from the N-terminus, the 435-residue chain is Transcription factor tau 55 kDa subunit (435 aa).

The tract at residues 362-417 is disordered; the sequence is GLLSPTEENETTNAGQSKGSSTANDPNIQIQEEDVGLPDSTNTSRDHTGDKEEVQS. Phosphoserine is present on serine 365. A compositionally biased stretch (polar residues) spans 372–391; the sequence is TTNAGQSKGSSTANDPNIQI. Basic and acidic residues predominate over residues 405-417; sequence SRDHTGDKEEVQS.

In terms of assembly, component of the TFIIIC complex composed of TFC1, TFC3, TFC4, TFC6, TFC7 and TFC8. The subunits are organized in two globular domains, tauA and tauB, connected by a proteolysis-sensitive and flexible linker.

The protein resides in the nucleus. Its function is as follows. TFIIIC mediates tRNA and 5S RNA gene activation by binding to intragenic promoter elements. Upstream of the transcription start site, TFIIIC assembles the initiation complex TFIIIB-TFIIIC-tDNA, which is sufficient for RNA polymerase III recruitment and function. Part of the tauA domain of TFIIIC that binds boxA DNA promoter sites of tRNA and similar genes. The chain is Transcription factor tau 55 kDa subunit (TFC7) from Saccharomyces cerevisiae (strain ATCC 204508 / S288c) (Baker's yeast).